We begin with the raw amino-acid sequence, 66 residues long: Large ribosomal subunit protein bL35 (66 aa).

Belongs to the bacterial ribosomal protein bL35 family.

The sequence is that of Large ribosomal subunit protein bL35 from Methylobacterium nodulans (strain LMG 21967 / CNCM I-2342 / ORS 2060).